The primary structure comprises 162 residues: UPF0114 protein SO_3997 (162 aa).

3 helical membrane passes run 10–32 (YASRWIMAPIYLGLSLVLLGLGI), 53–75 (LVLVTLSLIDITLVGGLIVMVMF), and 136–156 (IMWYLLIHITFVLSAFAMGYL).

Belongs to the UPF0114 family.

The protein resides in the cell membrane. In Shewanella oneidensis (strain ATCC 700550 / JCM 31522 / CIP 106686 / LMG 19005 / NCIMB 14063 / MR-1), this protein is UPF0114 protein SO_3997.